Consider the following 81-residue polypeptide: uncharacterized protein (81 aa).

The interval 1-58 (MPQSKQQFKRQGARQRDSKGKFVKARTGMATAPPAAVSTAAPTASTMTPTGSSTTATI) is disordered. A compositionally biased stretch (low complexity) spans 30 to 58 (ATAPPAAVSTAAPTASTMTPTGSSTTATI).

This is an uncharacterized protein from Caenorhabditis elegans.